The sequence spans 288 residues: Elongation factor Ts (288 aa).

The involved in Mg(2+) ion dislocation from EF-Tu stretch occupies residues 80–83 (TDFV).

The protein belongs to the EF-Ts family.

The protein localises to the cytoplasm. Its function is as follows. Associates with the EF-Tu.GDP complex and induces the exchange of GDP to GTP. It remains bound to the aminoacyl-tRNA.EF-Tu.GTP complex up to the GTP hydrolysis stage on the ribosome. This Chromobacterium violaceum (strain ATCC 12472 / DSM 30191 / JCM 1249 / CCUG 213 / NBRC 12614 / NCIMB 9131 / NCTC 9757 / MK) protein is Elongation factor Ts.